Reading from the N-terminus, the 314-residue chain is Ribosomal RNA small subunit methyltransferase H (314 aa).

S-adenosyl-L-methionine contacts are provided by residues 35–37, Asp54, Phe83, Asp104, and Gln111; that span reads GGH.

Belongs to the methyltransferase superfamily. RsmH family.

The protein localises to the cytoplasm. It carries out the reaction cytidine(1402) in 16S rRNA + S-adenosyl-L-methionine = N(4)-methylcytidine(1402) in 16S rRNA + S-adenosyl-L-homocysteine + H(+). Functionally, specifically methylates the N4 position of cytidine in position 1402 (C1402) of 16S rRNA. In Oenococcus oeni (strain ATCC BAA-331 / PSU-1), this protein is Ribosomal RNA small subunit methyltransferase H.